Here is a 239-residue protein sequence, read N- to C-terminus: Proteasome activator complex subunit 2 (239 aa).

Position 2 is an N-acetylalanine (A2). Residue S10 is modified to Phosphoserine. The tract at residues 65–86 is disordered; it reads DIPIPDPPPKDDEMETDKQEKK. Positions 72–86 are enriched in basic and acidic residues; it reads PPKDDEMETDKQEKK.

The protein belongs to the PA28 family. In terms of assembly, heterodimer of PSME1 and PSME2, which forms a hexameric ring.

Functionally, implicated in immunoproteasome assembly and required for efficient antigen processing. The PA28 activator complex enhances the generation of class I binding peptides by altering the cleavage pattern of the proteasome. This chain is Proteasome activator complex subunit 2 (PSME2), found in Bos taurus (Bovine).